The primary structure comprises 573 residues: Putative inorganic phosphate transporter C1683.01 (573 aa).

Helical transmembrane passes span 48 to 68, 100 to 120, 124 to 144, 154 to 174, 194 to 214, and 230 to 250; these read MMLA…INLV, AASN…GDFF, FVYG…IAMP, MMWV…DYPM, LIFA…IILL, and LEGV…GVLI. The span at 261–270 shows a compositional bias: polar residues; it reads FKNSQQLNSG. Disordered regions lie at residues 261-280 and 290-312; these read FKNS…TSLN and PSVT…RSNT. 6 helical membrane passes run 348-368, 397-417, 422-442, 451-471, 487-507, and 510-530; these read HLLG…GVNL, LIIA…LVEI, WIQL…AGRW, FACF…TTFI, GISA…FNFL, and IIGY…GILF.

This sequence belongs to the major facilitator superfamily. Sugar transporter (TC 2.A.1.1) family.

Its subcellular location is the endoplasmic reticulum membrane. In terms of biological role, high-affinity transporter for external inorganic phosphate. The protein is Putative inorganic phosphate transporter C1683.01 of Schizosaccharomyces pombe (strain 972 / ATCC 24843) (Fission yeast).